A 430-amino-acid polypeptide reads, in one-letter code: Centrosomal protein CEP57L1 (430 aa).

At serine 45 the chain carries Phosphoserine. Positions 46-213 form a coiled coil; the sequence is PNNQALVSAL…HQRRLFQDRA (168 aa). 2 disordered regions span residues 248-290 and 362-430; these read CLKR…GEPF and RKLQ…KWEQ. 3 stretches are compositionally biased toward basic and acidic residues: residues 249-272, 362-372, and 421-430; these read LKREPPQHTDCRFRGPASERERPP, RKLQEKVENSR, and LRRDDVKWEQ. Positions 290-377 form a coiled coil; sequence FSICDNLSEL…VENSRINESS (88 aa).

This sequence belongs to the translokin family.

The protein resides in the cytoplasm. It localises to the cytoskeleton. Its subcellular location is the microtubule organizing center. It is found in the centrosome. Its function is as follows. Centrosomal protein which may be required for microtubule attachment to centrosomes. The sequence is that of Centrosomal protein CEP57L1 (Cep57l1) from Rattus norvegicus (Rat).